A 421-amino-acid chain; its full sequence is Imidazolonepropionase (421 aa).

2 residues coordinate Fe(3+): His-81 and His-83. His-81 and His-83 together coordinate Zn(2+). 3 residues coordinate 4-imidazolone-5-propanoate: Arg-90, Tyr-153, and His-186. Residue Tyr-153 participates in N-formimidoyl-L-glutamate binding. His-251 is a binding site for Fe(3+). His-251 serves as a coordination point for Zn(2+). Glu-254 lines the 4-imidazolone-5-propanoate pocket. Residue Asp-326 participates in Fe(3+) binding. Residue Asp-326 participates in Zn(2+) binding. 2 residues coordinate N-formimidoyl-L-glutamate: Asn-328 and Gly-330. Ser-331 contacts 4-imidazolone-5-propanoate.

This sequence belongs to the metallo-dependent hydrolases superfamily. HutI family. Zn(2+) is required as a cofactor. Requires Fe(3+) as cofactor.

The protein resides in the cytoplasm. It carries out the reaction 4-imidazolone-5-propanoate + H2O = N-formimidoyl-L-glutamate. The protein operates within amino-acid degradation; L-histidine degradation into L-glutamate; N-formimidoyl-L-glutamate from L-histidine: step 3/3. Catalyzes the hydrolytic cleavage of the carbon-nitrogen bond in imidazolone-5-propanoate to yield N-formimidoyl-L-glutamate. It is the third step in the universal histidine degradation pathway. The protein is Imidazolonepropionase of Streptococcus gordonii (strain Challis / ATCC 35105 / BCRC 15272 / CH1 / DL1 / V288).